We begin with the raw amino-acid sequence, 680 residues long: Methionine--tRNA ligase (680 aa).

The 'HIGH' region motif lies at 15–25 (PYANGSIHLGH). Zn(2+) is bound by residues cysteine 146, cysteine 149, cysteine 159, and cysteine 162. The 'KMSKS' region signature appears at 332-336 (KMSKS). Position 335 (lysine 335) interacts with ATP. The tRNA-binding domain occupies 579 to 680 (DFAKVDMRIA…EGAQPGMRVM (102 aa)).

This sequence belongs to the class-I aminoacyl-tRNA synthetase family. MetG type 1 subfamily. As to quaternary structure, homodimer. Zn(2+) is required as a cofactor.

It is found in the cytoplasm. It carries out the reaction tRNA(Met) + L-methionine + ATP = L-methionyl-tRNA(Met) + AMP + diphosphate. Functionally, is required not only for elongation of protein synthesis but also for the initiation of all mRNA translation through initiator tRNA(fMet) aminoacylation. In Photobacterium profundum (strain SS9), this protein is Methionine--tRNA ligase.